A 156-amino-acid polypeptide reads, in one-letter code: Calcium-binding protein A (156 aa).

4 EF-hand domains span residues 4-39, 40-75, 80-115, and 118-153; these read AITK…TGSK, DPLR…VAAK, AINN…NNPD, and APLM…YKSL. 18 residues coordinate Ca(2+): Asp17, Asn19, Asp21, Asn23, Glu28, Asp53, Asp55, Asp57, Glu64, Asp93, Asp95, Asp97, Arg99, Glu104, Asp131, Asp133, Asp135, and Glu142.

The polypeptide is Calcium-binding protein A (cbpA) (Dictyostelium discoideum (Social amoeba)).